A 32-amino-acid chain; its full sequence is Protamine-3A (32 aa).

The tract at residues 1 to 32 is disordered; the sequence is PRRRRRSSSRPIRRRRRPRVSRRRRRGGRRRR.

As to expression, testis.

Its subcellular location is the nucleus. It is found in the chromosome. Protamines substitute for histones in the chromatin of sperm during the haploid phase of spermatogenesis. They compact sperm DNA into a highly condensed, stable and inactive complex. This Oncorhynchus mykiss (Rainbow trout) protein is Protamine-3A.